The sequence spans 304 residues: Probable 5-dehydro-4-deoxyglucarate dehydratase (304 aa).

The protein belongs to the DapA family.

It catalyses the reaction 5-dehydro-4-deoxy-D-glucarate + H(+) = 2,5-dioxopentanoate + CO2 + H2O. Its pathway is carbohydrate acid metabolism; D-glucarate degradation; 2,5-dioxopentanoate from D-glucarate: step 2/2. The chain is Probable 5-dehydro-4-deoxyglucarate dehydratase from Rhodococcus opacus (strain B4).